A 374-amino-acid chain; its full sequence is tRNA (guanine(26)-N(2))-dimethyltransferase (374 aa).

The Trm1 methyltransferase domain maps to 1–367 (MILKEGEVVF…ATLKNVIEAI (367 aa)). Positions 34, 66, 86, 113, and 114 each coordinate S-adenosyl-L-methionine.

It belongs to the class I-like SAM-binding methyltransferase superfamily. Trm1 family.

It catalyses the reaction guanosine(26) in tRNA + 2 S-adenosyl-L-methionine = N(2)-dimethylguanosine(26) in tRNA + 2 S-adenosyl-L-homocysteine + 2 H(+). In terms of biological role, dimethylates a single guanine residue at position 26 of a number of tRNAs using S-adenosyl-L-methionine as donor of the methyl groups. This Methanocaldococcus jannaschii (strain ATCC 43067 / DSM 2661 / JAL-1 / JCM 10045 / NBRC 100440) (Methanococcus jannaschii) protein is tRNA (guanine(26)-N(2))-dimethyltransferase.